We begin with the raw amino-acid sequence, 341 residues long: tRNA N6-adenosine threonylcarbamoyltransferase (341 aa).

Positions 111 and 115 each coordinate Fe cation. Residues 134 to 138, D167, G180, and N276 contribute to the substrate site; that span reads LVSGG. Residue D304 participates in Fe cation binding.

It belongs to the KAE1 / TsaD family. Fe(2+) serves as cofactor.

Its subcellular location is the cytoplasm. The enzyme catalyses L-threonylcarbamoyladenylate + adenosine(37) in tRNA = N(6)-L-threonylcarbamoyladenosine(37) in tRNA + AMP + H(+). Its function is as follows. Required for the formation of a threonylcarbamoyl group on adenosine at position 37 (t(6)A37) in tRNAs that read codons beginning with adenine. Is involved in the transfer of the threonylcarbamoyl moiety of threonylcarbamoyl-AMP (TC-AMP) to the N6 group of A37, together with TsaE and TsaB. TsaD likely plays a direct catalytic role in this reaction. The sequence is that of tRNA N6-adenosine threonylcarbamoyltransferase from Pseudomonas putida (strain W619).